We begin with the raw amino-acid sequence, 214 residues long: Thymidylate kinase (214 aa).

An ATP-binding site is contributed by 10–17 (GPDGAGKT).

It belongs to the thymidylate kinase family.

The enzyme catalyses dTMP + ATP = dTDP + ADP. In terms of biological role, phosphorylation of dTMP to form dTDP in both de novo and salvage pathways of dTTP synthesis. The protein is Thymidylate kinase of Latilactobacillus sakei subsp. sakei (strain 23K) (Lactobacillus sakei subsp. sakei).